The chain runs to 644 residues: 1-deoxy-D-xylulose-5-phosphate synthase (644 aa).

Thiamine diphosphate-binding positions include histidine 72 and 113 to 115 (GHA). Aspartate 144 contributes to the Mg(2+) binding site. Thiamine diphosphate is bound by residues 145 to 146 (GA), asparagine 174, tyrosine 287, and glutamate 370. Asparagine 174 provides a ligand contact to Mg(2+).

Belongs to the transketolase family. DXPS subfamily. Homodimer. The cofactor is Mg(2+). It depends on thiamine diphosphate as a cofactor.

The enzyme catalyses D-glyceraldehyde 3-phosphate + pyruvate + H(+) = 1-deoxy-D-xylulose 5-phosphate + CO2. The protein operates within metabolic intermediate biosynthesis; 1-deoxy-D-xylulose 5-phosphate biosynthesis; 1-deoxy-D-xylulose 5-phosphate from D-glyceraldehyde 3-phosphate and pyruvate: step 1/1. In terms of biological role, catalyzes the acyloin condensation reaction between C atoms 2 and 3 of pyruvate and glyceraldehyde 3-phosphate to yield 1-deoxy-D-xylulose-5-phosphate (DXP). The protein is 1-deoxy-D-xylulose-5-phosphate synthase of Prochlorococcus marinus (strain MIT 9303).